The sequence spans 413 residues: Multifunctional CCA protein (413 aa).

ATP is bound by residues G8 and R11. Residues G8 and R11 each coordinate CTP. Mg(2+)-binding residues include D21 and D23. ATP-binding residues include R91, R137, and R140. CTP is bound by residues R91, R137, and R140. Residues T228 to W329 form the HD domain.

Belongs to the tRNA nucleotidyltransferase/poly(A) polymerase family. Bacterial CCA-adding enzyme type 1 subfamily. Monomer. Can also form homodimers and oligomers. Mg(2+) is required as a cofactor. It depends on Ni(2+) as a cofactor.

It carries out the reaction a tRNA precursor + 2 CTP + ATP = a tRNA with a 3' CCA end + 3 diphosphate. The catalysed reaction is a tRNA with a 3' CCA end + 2 CTP + ATP = a tRNA with a 3' CCACCA end + 3 diphosphate. In terms of biological role, catalyzes the addition and repair of the essential 3'-terminal CCA sequence in tRNAs without using a nucleic acid template. Adds these three nucleotides in the order of C, C, and A to the tRNA nucleotide-73, using CTP and ATP as substrates and producing inorganic pyrophosphate. tRNA 3'-terminal CCA addition is required both for tRNA processing and repair. Also involved in tRNA surveillance by mediating tandem CCA addition to generate a CCACCA at the 3' terminus of unstable tRNAs. While stable tRNAs receive only 3'-terminal CCA, unstable tRNAs are marked with CCACCA and rapidly degraded. The chain is Multifunctional CCA protein from Aeromonas salmonicida (strain A449).